A 147-amino-acid polypeptide reads, in one-letter code: Sec-independent protein translocase protein TatB (147 aa).

The chain crosses the membrane as a helical span at residues 1 to 21; it reads MFDFGFSELIVIAVVTLIVVG. The segment at 117–147 is disordered; it reads APAPMSLAPHGDAASAGREPAAVPGSGPEKA.

The protein belongs to the TatB family. The Tat system comprises two distinct complexes: a TatABC complex, containing multiple copies of TatA, TatB and TatC subunits, and a separate TatA complex, containing only TatA subunits. Substrates initially bind to the TatABC complex, which probably triggers association of the separate TatA complex to form the active translocon.

The protein localises to the cell inner membrane. Functionally, part of the twin-arginine translocation (Tat) system that transports large folded proteins containing a characteristic twin-arginine motif in their signal peptide across membranes. Together with TatC, TatB is part of a receptor directly interacting with Tat signal peptides. TatB may form an oligomeric binding site that transiently accommodates folded Tat precursor proteins before their translocation. The sequence is that of Sec-independent protein translocase protein TatB from Aromatoleum aromaticum (strain DSM 19018 / LMG 30748 / EbN1) (Azoarcus sp. (strain EbN1)).